A 620-amino-acid polypeptide reads, in one-letter code: Glutathione-regulated potassium-efflux system protein KefC (620 aa).

Helical transmembrane passes span 4-24 (HTLI…PIAV), 26-46 (LGLG…PWGL), 54-74 (SILH…GLEL), 90-110 (GALQ…LLGL), 114-134 (VAEL…MQAM), 149-169 (FAVL…IPLL), 178-198 (MGAF…VVLL), 218-238 (VFSA…EEVG), 270-290 (GLLL…GTLL), 294-314 (LRIV…LWLI), 327-347 (WFAV…GAAQ), and 359-379 (SLTL…VILN). Residues 399-518 (QPRVIIAGFG…AGVEKPERET (120 aa)) form the RCK N-terminal domain. The interval 597–620 (GWQGTEEGKHTGNMADEPETKPSS) is disordered.

It belongs to the monovalent cation:proton antiporter 2 (CPA2) transporter (TC 2.A.37) family. KefC subfamily. In terms of assembly, homodimer. Interacts with the regulatory subunit KefF.

It is found in the cell inner membrane. Pore-forming subunit of a potassium efflux system that confers protection against electrophiles. Catalyzes K(+)/H(+) antiport. This Escherichia coli O7:K1 (strain IAI39 / ExPEC) protein is Glutathione-regulated potassium-efflux system protein KefC.